A 103-amino-acid polypeptide reads, in one-letter code: Large ribosomal subunit protein bL21 (103 aa).

Belongs to the bacterial ribosomal protein bL21 family. As to quaternary structure, part of the 50S ribosomal subunit. Contacts protein L20.

Functionally, this protein binds to 23S rRNA in the presence of protein L20. This Yersinia pseudotuberculosis serotype O:1b (strain IP 31758) protein is Large ribosomal subunit protein bL21.